A 422-amino-acid chain; its full sequence is UDP-N-acetylglucosamine 1-carboxyvinyltransferase (422 aa).

22–23 provides a ligand contact to phosphoenolpyruvate; that stretch reads KN. Arg95 contacts UDP-N-acetyl-alpha-D-glucosamine. The active-site Proton donor is Cys119. Residue Cys119 is modified to 2-(S-cysteinyl)pyruvic acid O-phosphothioketal. Residues 124 to 128, Asp309, and Val331 contribute to the UDP-N-acetyl-alpha-D-glucosamine site; that span reads RPIDQ.

Belongs to the EPSP synthase family. MurA subfamily.

The protein resides in the cytoplasm. The catalysed reaction is phosphoenolpyruvate + UDP-N-acetyl-alpha-D-glucosamine = UDP-N-acetyl-3-O-(1-carboxyvinyl)-alpha-D-glucosamine + phosphate. Its pathway is cell wall biogenesis; peptidoglycan biosynthesis. Its function is as follows. Cell wall formation. Adds enolpyruvyl to UDP-N-acetylglucosamine. The protein is UDP-N-acetylglucosamine 1-carboxyvinyltransferase of Anaeromyxobacter sp. (strain Fw109-5).